We begin with the raw amino-acid sequence, 489 residues long: ATP synthase subunit beta 1 (489 aa).

Position 159–166 (159–166) interacts with ATP; it reads GGAGVGKT. Basic and acidic residues predominate over residues 465-477; that stretch reads EKSKKAAEDKPKA. A disordered region spans residues 465 to 489; that stretch reads EKSKKAAEDKPKAEEDEDATSLHDA.

Belongs to the ATPase alpha/beta chains family. F-type ATPases have 2 components, CF(1) - the catalytic core - and CF(0) - the membrane proton channel. CF(1) has five subunits: alpha(3), beta(3), gamma(1), delta(1), epsilon(1). CF(0) has three main subunits: a(1), b(2) and c(9-12). The alpha and beta chains form an alternating ring which encloses part of the gamma chain. CF(1) is attached to CF(0) by a central stalk formed by the gamma and epsilon chains, while a peripheral stalk is formed by the delta and b chains.

It localises to the cell inner membrane. It catalyses the reaction ATP + H2O + 4 H(+)(in) = ADP + phosphate + 5 H(+)(out). Functionally, produces ATP from ADP in the presence of a proton gradient across the membrane. The catalytic sites are hosted primarily by the beta subunits. The protein is ATP synthase subunit beta 1 of Marinomonas sp. (strain MWYL1).